Reading from the N-terminus, the 518-residue chain is Probable pectinesterase/pectinesterase inhibitor 16 (518 aa).

A signal peptide spans 1–33 (MASSSSISNHKIPNTLMFLVIVNFLYLIQTNSA). Positions 30–172 (TNSAVSISSN…TGLLTSSLDL (143 aa)) are pectinesterase inhibitor 16. Asn82 and Asn161 each carry an N-linked (GlcNAc...) asparagine glycan. The segment at 213–502 (DAVVAPDGSG…FTVASFIDGN (290 aa)) is pectinesterase 16. Substrate-binding residues include Thr289 and Gln319. Residue Asp342 is the Proton donor; for pectinesterase activity of the active site. The active-site Nucleophile; for pectinesterase activity is the Asp363. Substrate-binding residues include Arg422 and Trp424.

The protein in the N-terminal section; belongs to the PMEI family. This sequence in the C-terminal section; belongs to the pectinesterase family. As to expression, expressed in siliques and floral stems.

The protein resides in the secreted. Its subcellular location is the cell wall. The enzyme catalyses [(1-&gt;4)-alpha-D-galacturonosyl methyl ester](n) + n H2O = [(1-&gt;4)-alpha-D-galacturonosyl](n) + n methanol + n H(+). It participates in glycan metabolism; pectin degradation; 2-dehydro-3-deoxy-D-gluconate from pectin: step 1/5. Acts in the modification of cell walls via demethylesterification of cell wall pectin. The sequence is that of Probable pectinesterase/pectinesterase inhibitor 16 (PME16) from Arabidopsis thaliana (Mouse-ear cress).